The chain runs to 102 residues: Putative ribosomal protein uL13-like (102 aa).

It belongs to the universal ribosomal protein uL13 family.

This chain is Putative ribosomal protein uL13-like (RPL13AP3), found in Homo sapiens (Human).